Reading from the N-terminus, the 76-residue chain is Probable 26S proteasome complex subunit dss-1 (76 aa).

Disordered stretches follow at residues 1 to 28 (MSST…FEEF) and 52 to 76 (DDET…HPIA). Basic and acidic residues-rich tracts occupy residues 7-20 (TKKD…KKET) and 57-70 (ESEF…ELRK).

Belongs to the DSS1/SEM1 family. Part of the 26S proteasome.

Its subcellular location is the nucleus. The protein resides in the cytoplasm. In terms of biological role, subunit of the 26S proteasome which plays a role in ubiquitin-dependent proteolysis. Has an essential role in oogenesis and larval growth. Required for intestinal function and default lifespan. This Caenorhabditis briggsae protein is Probable 26S proteasome complex subunit dss-1.